The following is a 277-amino-acid chain: Large ribosomal subunit protein uL2c (277 aa).

Disordered regions lie at residues 24-57 and 226-266; these read IVQS…RGGG and NAAD…HKYS.

It belongs to the universal ribosomal protein uL2 family. Part of the 50S ribosomal subunit.

It localises to the plastid. The protein localises to the chloroplast. This chain is Large ribosomal subunit protein uL2c (rpl2), found in Zygnema circumcarinatum (Green alga).